A 138-amino-acid polypeptide reads, in one-letter code: MAKAIPRRSSRRNGRIGSRKSARRIPKGVIHVQASFNNTIVTVTDVRGRVVSWSSAGTSGFKGTRRGTPFAAETAASNAIRTVVDRGMLRAEVMIKGPGLGRDAALRAILQSGILLTFVRDVTPMPHNGCRPPKKRRV.

The disordered stretch occupies residues 1 to 23; the sequence is MAKAIPRRSSRRNGRIGSRKSAR.

This sequence belongs to the universal ribosomal protein uS11 family. As to quaternary structure, part of the 30S ribosomal subunit.

It localises to the plastid. Its subcellular location is the chloroplast. The chain is Small ribosomal subunit protein uS11c from Ipomoea purpurea (Common morning glory).